The sequence spans 212 residues: Leucine efflux protein (212 aa).

The next 6 membrane-spanning stretches (helical) occupy residues 12–32, 49–69, 71–91, 122–142, 153–173, and 188–208; these read TYLVGAIFIVLVPGPNTLFVL, GVFIGDAVLMFLAWAGVATLI, TTPILFNIVRYLGAFYLLYLG, ILSLTNPKAILFYVSFFVQFI, FFILAATLELVSFCYLSFLII, and LAKVGNSLIGLMFVGFAARLA.

It belongs to the Rht family.

The protein resides in the cell inner membrane. It carries out the reaction L-leucine(in) + H(+)(out) = L-leucine(out) + H(+)(in). Its activity is regulated as follows. Leucine export is inhibited by the proton ionophore carbonyl cyanide m-chlorophenylhydrazone (CCCP). In terms of biological role, exporter of leucine. Can also transport its natural analog L-alpha-amino-n-butyric acid and some other structurally unrelated amino acids. Leucine excretion is probably driven by proton motive force. This is Leucine efflux protein from Escherichia coli (strain K12).